The following is a 379-amino-acid chain: Programmed cell death protein 2-like (379 aa).

This is Programmed cell death protein 2-like (PDCD2L) from Gallus gallus (Chicken).